The sequence spans 264 residues: MEALLESRSGLWAGGPAPGQFYRIPPTPGSSVDPVSALYGSPITRTQNPMVTGTSVLGLKFEGGVVIAADMLGSYGSLARFRNISRIMRVNNSTMLGASGDYADFQYLKQVLGQMVIDEELLGDGHSYSPKAIHSWLTRAMYSRRSKMNPLWNTMVIGGYADGESFLGYVDMLGVAYEAPSLATGYGAYLAQPLLREVLEKQPVLSQTEARELVERCMRVLYYRDARSYNRFQIATVTEKGVEIEGPLSAETNWDIAHMISGFE.

Met1 bears the N-acetylmethionine mark. A propeptide spanning residues 1 to 45 (MEALLESRSGLWAGGPAPGQFYRIPPTPGSSVDPVSALYGSPITR) is cleaved from the precursor. Tyr102 is modified (phosphotyrosine).

The protein belongs to the peptidase T1B family. As to quaternary structure, the 26S proteasome consists of a 20S proteasome core and two 19S regulatory subunits. The 20S proteasome core is a barrel-shaped complex made of 28 subunits that are arranged in four stacked rings. The two outer rings are each formed by seven alpha subunits, and the two inner rings are formed by seven beta subunits. The proteolytic activity is exerted by three beta-subunits PSMB5, PSMB6 and PSMB7. Forms a ternary complex with SMAD1 and OAZ1 before PSMB4 is incorporated into the 20S proteasome. Interacts with PRPF19.

It is found in the cytoplasm. The protein resides in the nucleus. Functionally, non-catalytic component of the 20S core proteasome complex involved in the proteolytic degradation of most intracellular proteins. This complex plays numerous essential roles within the cell by associating with different regulatory particles. Associated with two 19S regulatory particles, forms the 26S proteasome and thus participates in the ATP-dependent degradation of ubiquitinated proteins. The 26S proteasome plays a key role in the maintenance of protein homeostasis by removing misfolded or damaged proteins that could impair cellular functions, and by removing proteins whose functions are no longer required. Associated with the PA200 or PA28, the 20S proteasome mediates ubiquitin-independent protein degradation. This type of proteolysis is required in several pathways including spermatogenesis (20S-PA200 complex) or generation of a subset of MHC class I-presented antigenic peptides (20S-PA28 complex). SMAD1/OAZ1/PSMB4 complex mediates the degradation of the CREBBP/EP300 repressor SNIP1. The sequence is that of Proteasome subunit beta type-4 (PSMB4) from Bos taurus (Bovine).